A 107-amino-acid chain; its full sequence is Neuroparsin-A (107 aa).

Positions 1-22 (MKATAALVAATLLLAVTLFHRA) are cleaved as a signal peptide. Residues 23–24 (ER) constitute a propeptide that is removed on maturation.

Homodimer; disulfide-linked.

Functionally, neurosparins are multifunctional neurohormones: they inhibit the effects of juvenile hormone, stimulate fluid reabsorption of isolated recta and induces an increase in hemolymph lipid and trehalose levels. The chain is Neuroparsin-A from Locusta migratoria (Migratory locust).